The sequence spans 804 residues: Probable cadmium-transporting ATPase (804 aa).

HMA domains lie at aspartate 11–alanine 74 and aspartate 89–isoleucine 152. Cd(2+) is bound by residues cysteine 22, cysteine 25, cysteine 100, and cysteine 103. Helical transmembrane passes span serine 183 to glycine 203, leucine 207 to valine 227, isoleucine 248 to isoleucine 268, isoleucine 413 to tryptophan 433, and leucine 441 to valine 461. Residue aspartate 492 is the 4-aspartylphosphate intermediate of the active site. 2 consecutive transmembrane segments (helical) span residues leucine 749–isoleucine 771 and threonine 776–leucine 798.

The protein belongs to the cation transport ATPase (P-type) (TC 3.A.3) family. Type IB subfamily.

The protein localises to the cell membrane. It catalyses the reaction Cd(2+)(in) + ATP + H2O = Cd(2+)(out) + ADP + phosphate + H(+). In terms of biological role, couples the hydrolysis of ATP with the export of cadmium. Involved in cadmium resistance. The chain is Probable cadmium-transporting ATPase (cadA) from Staphylococcus aureus.